The following is a 338-amino-acid chain: 1-aminocyclopropane-1-carboxylate deaminase (338 aa).

Lysine 51 carries the post-translational modification N6-(pyridoxal phosphate)lysine. Serine 78 (nucleophile) is an active-site residue.

This sequence belongs to the ACC deaminase/D-cysteine desulfhydrase family. As to quaternary structure, homotrimer. It depends on pyridoxal 5'-phosphate as a cofactor.

It carries out the reaction 1-aminocyclopropane-1-carboxylate + H2O = 2-oxobutanoate + NH4(+). Its function is as follows. Catalyzes a cyclopropane ring-opening reaction, the irreversible conversion of 1-aminocyclopropane-1-carboxylate (ACC) to ammonia and alpha-ketobutyrate. Allows growth on ACC as a nitrogen source. This Paraburkholderia phytofirmans (strain DSM 17436 / LMG 22146 / PsJN) (Burkholderia phytofirmans) protein is 1-aminocyclopropane-1-carboxylate deaminase.